A 362-amino-acid polypeptide reads, in one-letter code: Red-sensitive opsin (362 aa).

At 1-49 (MAAWEAAFAARRRHEEEDTTRDSVFTYTNSNNTRGPFEGPNYHIAPRWV) the chain is on the extracellular side. A glycan (N-linked (GlcNAc...) asparagine) is linked at N31. Residues 50–74 (YNLTSVWMIFVVAASVFTNGLVLVA) traverse the membrane as a helical segment. The Cytoplasmic segment spans residues 75 to 86 (TWKFKKLRHPLN). The chain crosses the membrane as a helical span at residues 87–112 (WILVNLAVADLGETVIASTISVINQI). Over 113 to 126 (SGYFILGHPMCVVE) the chain is Extracellular. C123 and C200 are oxidised to a cystine. The helical transmembrane segment at 127–146 (GYTVSACGITALWSLAIISW) threads the bilayer. Residues 147–165 (ERWFVVCKPFGNIKFDGKL) are Cytoplasmic-facing. A helical transmembrane segment spans residues 166 to 189 (AVAGILFSWLWSCAWTAPPIFGWS). Residues 190–215 (RYWPHGLKTSCGPDVFSGSSDPGVQS) are Extracellular-facing. The chain crosses the membrane as a helical span at residues 216 to 243 (YMVVLMVTCCFFPLAIIILCYLQVWLAI). At 244–265 (RAVAAQQKESESTQKAEKEVSR) the chain is on the cytoplasmic side. The helical transmembrane segment at 266 to 289 (MVVVMIVAYCFCWGPYTFFACFAA) threads the bilayer. The Extracellular segment spans residues 290–297 (ANPGYAFH). A helical transmembrane segment spans residues 298-322 (PLAAALPAYFAKSATIYNPIIYVFM). At K309 the chain carries N6-(retinylidene)lysine. At 323-362 (NRQFRNCILQLFGKKVDDGSEVSTSRTEVSSVSNSSVSPA) the chain is on the cytoplasmic side.

The protein belongs to the G-protein coupled receptor 1 family. Opsin subfamily. Phosphorylated on some or all of the serine and threonine residues present in the C-terminal region. In terms of tissue distribution, the color pigments are found in the cone photoreceptor cells.

Its subcellular location is the membrane. In terms of biological role, visual pigments are the light-absorbing molecules that mediate vision. They consist of an apoprotein, opsin, covalently linked to cis-retinal. The sequence is that of Red-sensitive opsin from Gallus gallus (Chicken).